The primary structure comprises 286 residues: Homoserine kinase (286 aa).

ATP is bound at residue proline 78–serine 88.

This sequence belongs to the GHMP kinase family. Homoserine kinase subfamily.

It localises to the cytoplasm. It catalyses the reaction L-homoserine + ATP = O-phospho-L-homoserine + ADP + H(+). The protein operates within amino-acid biosynthesis; L-threonine biosynthesis; L-threonine from L-aspartate: step 4/5. Its function is as follows. Catalyzes the ATP-dependent phosphorylation of L-homoserine to L-homoserine phosphate. The chain is Homoserine kinase from Streptococcus suis (strain 98HAH33).